The sequence spans 285 residues: Nurim (285 aa).

Residues 1–16 lie on the Nuclear side of the membrane; the sequence is MSANVQVSGQLSSGPS. Residues 17-44 form a helical membrane-spanning segment; that stretch reads LPACIVLSAVSLLCFVAGFGTGAEFVRF. The Perinuclear space portion of the chain corresponds to 45-74; that stretch reads LSFGAIFRNISGGLDGEIPLTWSEAIRNTQ. The helical transmembrane segment at 75 to 96 threads the bilayer; sequence FQCCIGIDIGLLFLFVLQHSLM. The Nuclear segment spans residues 97–113; the sequence is AWTAVKKNVLHVFGVLQ. A helical membrane pass occupies residues 114-130; it reads RSIYILCTALSLQVLMR. The Perinuclear space segment spans residues 131–149; sequence FWQPCPHGPYLWNVSSDPW. The helical transmembrane segment at 150–180 threads the bilayer; that stretch reads SAWLPLLCALVHTISWLLIFSVLLIFDYAEL. The Nuclear portion of the chain corresponds to 181–207; that stretch reads MGIKQVYYFCLGMGDPLSHKSPRVARL. A helical transmembrane segment spans residues 208–226; it reads YAHLRHPIYLELLLILWAV. The Perinuclear space segment spans residues 227-232; sequence PCLPPD. Residues 233-250 form a helical membrane-spanning segment; sequence RLILAIFFTLYLSLVHRL. The Nuclear portion of the chain corresponds to 251–285; that stretch reads DVQDYAYLRSQLEKKFLLFSREEASAVGGQIRKNN.

The protein belongs to the nurim family.

It localises to the nucleus inner membrane. This is Nurim (nrm) from Xenopus laevis (African clawed frog).